The chain runs to 265 residues: WUSCHEL-related homeobox 3B (265 aa).

The segment at residues 4 to 68 (TPSTRWCPTP…NHKARERQRL (65 aa)) is a DNA-binding region (homeobox; WUS-type). 2 disordered regions span residues 77–107 (QQQY…APPA) and 242–265 (PTKS…TSTN). The segment covering 254 to 265 (SSKSSSCSTSTN) has biased composition (low complexity).

This sequence belongs to the WUS homeobox family. Predominantly expressed in tissues enriched for shoot meristems and young lateral organ primordia. First expressed in lateral domains of shoot meristems. It is then expressed in the margins of young lateral organ primordia. Not expressed in roots, seedling leaves or fully expanded coleoptiles. Also expressed in vegetative shoot apices (five leaf primordia and the SAM) and in the male inflorescence. Expressed at high level in the female inflorescence.

It localises to the nucleus. In terms of biological role, probable transcription factor required to initiate organ founder cells in a lateral domain of shoot meristems. Involved in leaf formation. The polypeptide is WUSCHEL-related homeobox 3B (WOX3B) (Zea mays (Maize)).